A 164-amino-acid polypeptide reads, in one-letter code: Glutamate uptake regulatory protein (164 aa).

The HTH asnC-type domain occupies 5–66 (LDDFDIKILD…LLDPQKIGLG (62 aa)). The H-T-H motif DNA-binding region spans 24 to 43 (MAELSEKTGLSANACWRRIR).

Functionally, represses the secondary, H(+)-coupled glutamate uptake system (Gluemp) genes. This Zymomonas mobilis subsp. mobilis (strain ATCC 10988 / DSM 424 / LMG 404 / NCIMB 8938 / NRRL B-806 / ZM1) protein is Glutamate uptake regulatory protein (grp).